The chain runs to 310 residues: Ornithine carbamoyltransferase (310 aa).

Carbamoyl phosphate is bound by residues Ser-57 to Thr-60, Gln-84, Arg-108, and His-135 to Gln-138. L-ornithine is bound by residues Asn-166, Asp-229, and Ser-233 to Met-234. Carbamoyl phosphate contacts are provided by residues Cys-269–Leu-270 and Arg-297.

Belongs to the aspartate/ornithine carbamoyltransferase superfamily. OTCase family.

Its subcellular location is the cytoplasm. The catalysed reaction is carbamoyl phosphate + L-ornithine = L-citrulline + phosphate + H(+). It participates in amino-acid biosynthesis; L-arginine biosynthesis; L-arginine from L-ornithine and carbamoyl phosphate: step 1/3. Its function is as follows. Reversibly catalyzes the transfer of the carbamoyl group from carbamoyl phosphate (CP) to the N(epsilon) atom of ornithine (ORN) to produce L-citrulline. The sequence is that of Ornithine carbamoyltransferase from Thermosynechococcus vestitus (strain NIES-2133 / IAM M-273 / BP-1).